The chain runs to 419 residues: UDP-N-acetylglucosamine 1-carboxyvinyltransferase 2 (419 aa).

24-25 (KN) contacts phosphoenolpyruvate. R94 serves as a coordination point for UDP-N-acetyl-alpha-D-glucosamine. The active-site Proton donor is C118. C118 bears the 2-(S-cysteinyl)pyruvic acid O-phosphothioketal mark. UDP-N-acetyl-alpha-D-glucosamine contacts are provided by residues 123–127 (RPIDQ), D307, and I329.

The protein belongs to the EPSP synthase family. MurA subfamily.

It is found in the cytoplasm. It carries out the reaction phosphoenolpyruvate + UDP-N-acetyl-alpha-D-glucosamine = UDP-N-acetyl-3-O-(1-carboxyvinyl)-alpha-D-glucosamine + phosphate. Its pathway is cell wall biogenesis; peptidoglycan biosynthesis. Functionally, cell wall formation. Adds enolpyruvyl to UDP-N-acetylglucosamine. The protein is UDP-N-acetylglucosamine 1-carboxyvinyltransferase 2 of Staphylococcus epidermidis (strain ATCC 35984 / DSM 28319 / BCRC 17069 / CCUG 31568 / BM 3577 / RP62A).